We begin with the raw amino-acid sequence, 75 residues long: M-myrmeciitoxin-Mp2a (75 aa).

The N-terminal stretch at 1–26 (MKLSCLLLTLAIIFVLTIVHAPNVEA) is a signal peptide. Positions 27–48 (KALADPESDAVGFADAVGEADP) are excised as a propeptide. Leu74 is subject to Leucine amide.

This sequence belongs to the formicidae venom precursor-01 superfamily. Ant pilosulin family. In terms of assembly, heterodimer with M-MIITX-Mp2b (pilosin-3b) (AC P0C023); disulfide-linked. Only heterodimers (and not monomers) have been identified in the venom. In terms of tissue distribution, expressed by the venom gland.

It is found in the secreted. Functionally, heterodimer protein that may serve both defensive (pain-inducing) and predatory (insecticidal) roles. Has membrane-disrupting activity and shows induction of non-specific calcium influx into cells,. Shows broad-spectrum activity against a diverse range of bacteria, and cell lines, as well as hemolytic activity (EC(50)=2.18 uM). In vivo, shows moderate insecticidal activity against D.melanogaster and potent anthelmintic activity against the veterinary nematode H.contortus. In addition, intraplantar injection into mice induces nocifensive behavior and mechanical allodynia. This is M-myrmeciitoxin-Mp2a from Myrmecia pilosula (Jack jumper ant).